The sequence spans 311 residues: Thioredoxin reductase (311 aa).

FAD is bound by residues 31–39 and 32–39; these read FEKGMPGGQ and EKGMPGGQ. A disulfide bridge links Cys133 with Cys136. Residue 281 to 290 coordinates FAD; that stretch reads DIRIFAPKQV.

The protein belongs to the class-II pyridine nucleotide-disulfide oxidoreductase family. As to quaternary structure, homodimer. FAD serves as cofactor.

The protein localises to the cytoplasm. It catalyses the reaction [thioredoxin]-dithiol + NADP(+) = [thioredoxin]-disulfide + NADPH + H(+). The sequence is that of Thioredoxin reductase (trxB) from Helicobacter pylori (strain J99 / ATCC 700824) (Campylobacter pylori J99).